The following is a 262-amino-acid chain: 4-hydroxy-2-oxo-heptane-1,7-dioate aldolase (262 aa).

The active-site Proton acceptor is the His-45. Substrate is bound at residue Gln-147. Glu-149 is a binding site for a divalent metal cation. 2 residues coordinate substrate: Ala-174 and Asp-175. Asp-175 contacts a divalent metal cation.

Belongs to the HpcH/HpaI aldolase family. As to quaternary structure, homohexamer; trimer of dimers. Requires a divalent metal cation as cofactor.

The enzyme catalyses 4-hydroxy-2-oxoheptanedioate = succinate semialdehyde + pyruvate. Its pathway is aromatic compound metabolism; 4-hydroxyphenylacetate degradation; pyruvate and succinate semialdehyde from 4-hydroxyphenylacetate: step 7/7. Its function is as follows. Catalyzes the reversible retro-aldol cleavage of 4-hydroxy-2-ketoheptane-1,7-dioate (HKHD) to pyruvate and succinic semialdehyde. This is 4-hydroxy-2-oxo-heptane-1,7-dioate aldolase from Shigella sonnei (strain Ss046).